We begin with the raw amino-acid sequence, 259 residues long: Small ribosomal subunit protein uS2 (259 aa).

This sequence belongs to the universal ribosomal protein uS2 family.

This chain is Small ribosomal subunit protein uS2, found in Streptococcus pneumoniae (strain 70585).